The sequence spans 419 residues: Dual specificity mitogen-activated protein kinase kinase 7 (419 aa).

Alanine 2 bears the N-acetylalanine mark. Positions 2 to 30 (AASSLEQKLSRLEAKLKQENREARRRIDL) form a coiled coil. Basic and acidic residues predominate over residues 18–30 (KQENREARRRIDL). Positions 18-77 (KQENREARRRIDLNLDISPQRPRPTLQLPLANDGGSRSPSSESSPQHPTPPSRPRHMLGL) are disordered. Over residues 36–63 (PQRPRPTLQLPLANDGGSRSPSSESSPQ) the composition is skewed to low complexity. The segment at 37–57 (QRPRPTLQLPLANDGGSRSPS) is d Domain. The 261-residue stretch at 120-380 (LENLGEMGSG…YNKLLEHSFI (261 aa)) folds into the Protein kinase domain. ATP is bound by residues 126–134 (MGSGTCGQV) and lysine 149. The active-site Proton acceptor is aspartate 243. Serine 271 is modified (phosphoserine; by MAP3K). Threonine 275 bears the Phosphothreonine; by MAP3K mark. Residues 377-400 (HSFIKHYETLEVDVASWFKDVMAK) are DVD domain. A Phosphoserine modification is found at serine 411.

This sequence belongs to the protein kinase superfamily. STE Ser/Thr protein kinase family. MAP kinase kinase subfamily. As to quaternary structure, interacts with VRK2. Interacts (via its D domain) with its substrates MAPK8/JNK1, MAPK9/JNK2 and MAPK10/JNK3. Interacts (via its DVD domain) with MAP3Ks activators like MAP3K5/ASK1 and MAP3K1/MEKK1. Interacts with MAPK8IP1/JIP1, MAPK8IP2/JIP2 and MAPK8IP3/JIP3 scaffold proteins. Interacts with RASSF7, the interaction promotes phosphorylation. Found in a complex with SH3RF1, RAC1, MAP3K11/MLK3, MAPK8IP1/JIP1 and MAPK8/JNK1. Found in a complex with SH3RF1, RAC2, MAP3K7/TAK1, MAPK8IP1/JIP1, MAPK8/JNK1 and MAPK9/JNK2. Requires Mg(2+) as cofactor. Activated by phosphorylation on Ser-271 and Thr-275 by MAP kinase kinase kinases (MAP3Ks).

The protein localises to the nucleus. It is found in the cytoplasm. The catalysed reaction is L-seryl-[protein] + ATP = O-phospho-L-seryl-[protein] + ADP + H(+). It catalyses the reaction L-threonyl-[protein] + ATP = O-phospho-L-threonyl-[protein] + ADP + H(+). It carries out the reaction L-tyrosyl-[protein] + ATP = O-phospho-L-tyrosyl-[protein] + ADP + H(+). Activated by phosphorylation by specific MAP kinase kinase kinases such as MAP3K1/MEKK1, MAP3K3/MEKK3, MAP3K11/MLK3 and MAP3K12/DLK. Functionally, dual specificity protein kinase which acts as an essential component of the MAP kinase signal transduction pathway. Essential component of the stress-activated protein kinase/c-Jun N-terminal kinase (SAP/JNK) signaling pathway. With MAP2K4/MKK4, is the one of the only known kinase to directly activate the stress-activated protein kinase/c-Jun N-terminal kinases MAPK8/JNK1, MAPK9/JNK2 and MAPK10/JNK3. MAP2K4/MKK4 and MAP2K7/MKK7 both activate the JNKs by phosphorylation, but they differ in their preference for the phosphorylation site in the Thr-Pro-Tyr motif. MAP2K4/MKK4 shows preference for phosphorylation of the Tyr residue and MAP2K7/MKK7 for the Thr residue. The monophosphorylation of JNKs on the Thr residue is sufficient to increase JNK activity indicating that MAP2K7/MKK7 is important to trigger JNK activity, while the additional phosphorylation of the Tyr residue by MAP2K4/MKK4 ensures optimal JNK activation. Has a specific role in JNK signal transduction pathway activated by pro-inflammatory cytokines. The MKK/JNK signaling pathway is also involved in mitochondrial death signaling pathway, including the release cytochrome c, leading to apoptosis. Part of a non-canonical MAPK signaling pathway, composed of the upstream MAP3K12 kinase and downstream MAP kinases MAPK1/ERK2 and MAPK3/ERK1, that enhances the AP-1-mediated transcription of APP in response to APOE. This Rattus norvegicus (Rat) protein is Dual specificity mitogen-activated protein kinase kinase 7.